A 375-amino-acid polypeptide reads, in one-letter code: Growth/differentiation factor 8 (375 aa).

The first 18 residues, 1–18 (MQKLQISVYIYLFMLIVA), serve as a signal peptide directing secretion. The propeptide occupies 19–266 (GPVDLNENSE…VTDTPKRSRR (248 aa)). A glycan (N-linked (GlcNAc...) asparagine) is linked at N71. 4 cysteine pairs are disulfide-bonded: C272/C282, C281/C340, C309/C372, and C313/C374.

Belongs to the TGF-beta family. As to quaternary structure, homodimer; disulfide-linked. Interacts with WFIKKN2, leading to inhibit its activity. Interacts with FSTL3. Post-translationally, synthesized as large precursor molecule that undergoes proteolytic cleavage to generate an N-terminal propeptide and a disulfide linked C-terminal dimer, which is the biologically active molecule. The circulating form consists of a latent complex of the C-terminal dimer and other proteins, including its propeptide, which maintain the C-terminal dimer in a latent, inactive state. Ligand activation requires additional cleavage of the prodomain by a tolloid-like metalloproteinase.

Its subcellular location is the secreted. In terms of biological role, acts specifically as a negative regulator of skeletal muscle growth. This Lepus capensis (Brown hare) protein is Growth/differentiation factor 8 (MSTN).